A 246-amino-acid chain; its full sequence is Ribonuclease PH (246 aa).

Phosphate contacts are provided by residues R95 and 133-135; that span reads GTR.

It belongs to the RNase PH family. Homohexameric ring arranged as a trimer of dimers.

It carries out the reaction tRNA(n+1) + phosphate = tRNA(n) + a ribonucleoside 5'-diphosphate. Phosphorolytic 3'-5' exoribonuclease that plays an important role in tRNA 3'-end maturation. Removes nucleotide residues following the 3'-CCA terminus of tRNAs; can also add nucleotides to the ends of RNA molecules by using nucleoside diphosphates as substrates, but this may not be physiologically important. Probably plays a role in initiation of 16S rRNA degradation (leading to ribosome degradation) during starvation. The sequence is that of Ribonuclease PH from Bordetella bronchiseptica (strain ATCC BAA-588 / NCTC 13252 / RB50) (Alcaligenes bronchisepticus).